The chain runs to 100 residues: Small ribosomal subunit protein uS14c (100 aa).

It belongs to the universal ribosomal protein uS14 family. Part of the 30S ribosomal subunit.

The protein localises to the plastid. The protein resides in the chloroplast. Functionally, binds 16S rRNA, required for the assembly of 30S particles. The sequence is that of Small ribosomal subunit protein uS14c from Oenothera argillicola (Appalachian evening primrose).